The primary structure comprises 370 residues: Chloromuconate cycloisomerase (370 aa).

Catalysis depends on Lys-165, which acts as the Proton acceptor. 3 residues coordinate Mn(2+): Asp-194, Glu-220, and Asp-245. The active-site Proton donor is the Glu-323.

This sequence belongs to the mandelate racemase/muconate lactonizing enzyme family. Mn(2+) is required as a cofactor.

It catalyses the reaction 2-[(2R)-2-chloro-2,5-dihydro-5-oxofuryl]acetate = 3-chloro-cis,cis-muconate + H(+). The protein operates within aromatic compound metabolism; 3-chlorocatechol degradation. This is Chloromuconate cycloisomerase (tcbD) from Pseudomonas sp. (strain P51).